A 557-amino-acid chain; its full sequence is MYMLKLSYILLFLGFVKFSWQDKQVPKVSTFTGNIRGYYKKSRSDRLYEAYEGIPYAQSPVGKFRFQPPRPIKKWSKDLSATKKSSVCMQYLMTFTTHGNRVKGSEDCLYINIYVPVRNNRKPLLPVMFWIHGGAFQFASGNEANETLFMDRNIVFVAINYRLGPFGFLSTGDIVVPGNMGLKDQSMALRWVFNNIKSFGGNPNKITIFGMSAGGASVHYHYLSPMSAGLFKRGISISGVAFCPWAQTKHAPEKAKKLGALMKCRTDNTKKMIDCLQSRPARIIAQAVGDFMFWLYNPFTPFGPVVETYGSNPFISNSPINIINNGQVYDVPWISGVVSKEGLYTAAEFVDNAKLLWHLNDHWDEIAPYLLDFNYTIPLDQHRQVAKKIKNYYLRSGPINYDKVESIIQMMSDRLFNIDFEKAVRLQARINKSPVWTYYYSYRAEHSVSEILSGGSTTDYGVCHGDDIFLTLNSIISNVTKPQDLAMQQLLINFYTSFAIQGIPYIDEASWPSLNPNDPDFRYLHIVNFTNIKMEVNNNFANKSFWKTIPFNENKLN.

The N-terminal stretch at 1-21 (MYMLKLSYILLFLGFVKFSWQ) is a signal peptide. The cysteines at positions 88 and 108 are disulfide-linked. Asparagine 145 carries an N-linked (GlcNAc...) asparagine glycan. The Acyl-ester intermediate role is filled by serine 212. Residues cysteine 264 and cysteine 275 are joined by a disulfide bond. Residue glutamate 341 is the Charge relay system of the active site. Asparagine 374 carries N-linked (GlcNAc...) asparagine glycosylation. Histidine 464 (charge relay system) is an active-site residue. Residues asparagine 478, asparagine 528, and asparagine 542 are each glycosylated (N-linked (GlcNAc...) asparagine).

Belongs to the type-B carboxylesterase/lipase family. As to expression, expressed by the venom gland.

It is found in the secreted. The catalysed reaction is a carboxylic ester + H2O = an alcohol + a carboxylate + H(+). The sequence is that of Venom carboxylesterase-6 from Apis mellifera (Honeybee).